The sequence spans 426 residues: MGEIQAIRGTKDILPAEVGYWQWLEETASRILGTALYQEIRTPIFEQTQLFERGIGEATDVVGKEMYTFLDRRQRSLTLRPEGTAGVVRAYIEHKLQAAGGVQRLWYKGPMFRYERPQAGRQRQFHQIGVELLGSDDPRADVEVITLASEILKAVGLENLKLDINSLGNAQDRQNYRQALLDYLTPYKADLDADSQQRLEKNPLRILDSKDEKTKIICENVPSILEHLGSDSQKHFERVQSLLTDLGVIYNLNPCLVRGLDYYTHTAFEIQSDDLGAQATVCGGGRYDGLIAQLGGLDTPAVGWAIGLERLIILLQQKQSLSFLVPDFYLVSKGEKAEARSVVLAQQLRGLGFSVELDLSGSAFGKQFKRADRAKAVGCIILGDAEAENGTVQLKWMATQEQISLTQADLLTQAGELKAQISRHKS.

Belongs to the class-II aminoacyl-tRNA synthetase family. As to quaternary structure, homodimer.

Its subcellular location is the cytoplasm. It catalyses the reaction tRNA(His) + L-histidine + ATP = L-histidyl-tRNA(His) + AMP + diphosphate + H(+). The protein is Histidine--tRNA ligase of Microcystis aeruginosa (strain NIES-843 / IAM M-2473).